The sequence spans 83 residues: Small ribosomal subunit protein bS18 (83 aa).

The protein belongs to the bacterial ribosomal protein bS18 family. Part of the 30S ribosomal subunit. Forms a tight heterodimer with protein bS6.

In terms of biological role, binds as a heterodimer with protein bS6 to the central domain of the 16S rRNA, where it helps stabilize the platform of the 30S subunit. In Methylobacterium sp. (strain 4-46), this protein is Small ribosomal subunit protein bS18.